We begin with the raw amino-acid sequence, 146 residues long: Sperm surface protein Sp17 (146 aa).

Basic and acidic residues predominate over residues 76-88 (EHESEKCEAEEKS). A disordered region spans residues 76-109 (EHESEKCEAEEKSQSVTEEETPVLTIDSEDDKDK). Positions 92–108 (TEEETPVLTIDSEDDKD) are enriched in acidic residues. The region spanning 110–139 (EEMAALKIQAAFRGHLAREDVKKIRTNKAE) is the IQ domain.

As to quaternary structure, homodimer. May interact with ROPN1. The N-terminus is blocked. Testis- and sperm-specific.

The protein resides in the membrane. Sperm surface zona pellucida binding protein. Helps to bind spermatozoa to the zona pellucida with high affinity. Might function in binding zona pellucida and carbohydrates. The sequence is that of Sperm surface protein Sp17 (SPA17) from Oryctolagus cuniculus (Rabbit).